A 155-amino-acid polypeptide reads, in one-letter code: 6,7-dimethyl-8-ribityllumazine synthase (155 aa).

5-amino-6-(D-ribitylamino)uracil is bound by residues Phe-22, 56-58 (AFE), and 80-82 (AVI). Residue 85-86 (ST) coordinates (2S)-2-hydroxy-3-oxobutyl phosphate. His-88 acts as the Proton donor in catalysis. Residue Phe-113 coordinates 5-amino-6-(D-ribitylamino)uracil. Arg-127 lines the (2S)-2-hydroxy-3-oxobutyl phosphate pocket.

This sequence belongs to the DMRL synthase family.

The catalysed reaction is (2S)-2-hydroxy-3-oxobutyl phosphate + 5-amino-6-(D-ribitylamino)uracil = 6,7-dimethyl-8-(1-D-ribityl)lumazine + phosphate + 2 H2O + H(+). It functions in the pathway cofactor biosynthesis; riboflavin biosynthesis; riboflavin from 2-hydroxy-3-oxobutyl phosphate and 5-amino-6-(D-ribitylamino)uracil: step 1/2. Its function is as follows. Catalyzes the formation of 6,7-dimethyl-8-ribityllumazine by condensation of 5-amino-6-(D-ribitylamino)uracil with 3,4-dihydroxy-2-butanone 4-phosphate. This is the penultimate step in the biosynthesis of riboflavin. This is 6,7-dimethyl-8-ribityllumazine synthase from Caldicellulosiruptor bescii (strain ATCC BAA-1888 / DSM 6725 / KCTC 15123 / Z-1320) (Anaerocellum thermophilum).